Consider the following 393-residue polypeptide: NAD(P)H-quinone oxidoreductase subunit H, chloroplastic (393 aa).

This sequence belongs to the complex I 49 kDa subunit family. NDH is composed of at least 16 different subunits, 5 of which are encoded in the nucleus.

It localises to the plastid. Its subcellular location is the chloroplast thylakoid membrane. The enzyme catalyses a plastoquinone + NADH + (n+1) H(+)(in) = a plastoquinol + NAD(+) + n H(+)(out). It catalyses the reaction a plastoquinone + NADPH + (n+1) H(+)(in) = a plastoquinol + NADP(+) + n H(+)(out). Its function is as follows. NDH shuttles electrons from NAD(P)H:plastoquinone, via FMN and iron-sulfur (Fe-S) centers, to quinones in the photosynthetic chain and possibly in a chloroplast respiratory chain. The immediate electron acceptor for the enzyme in this species is believed to be plastoquinone. Couples the redox reaction to proton translocation, and thus conserves the redox energy in a proton gradient. This is NAD(P)H-quinone oxidoreductase subunit H, chloroplastic from Nuphar advena (Common spatterdock).